The sequence spans 148 residues: Probable DNA-directed RNA polymerases I, II, and III subunit RPABC3 (148 aa).

The tract at residues 16–40 (DPDGKKFDRVSRYFCDAESFKMELI) is non-specific ssDNA binding.

It belongs to the eukaryotic RPB8 RNA polymerase subunit family. In terms of assembly, component of the RNA polymerase I (Pol I), RNA polymerase II (Pol II) and RNA polymerase III (Pol III) complexes consisting of at least 13, 12 and 17 subunits, respectively. Directly interacts with POLR2A.

Its subcellular location is the nucleus. DNA-dependent RNA polymerase catalyzes the transcription of DNA into RNA using the four ribonucleoside triphosphates as substrates. Common component of RNA polymerases I, II and III which synthesize ribosomal RNA precursors, mRNA precursors and many functional non-coding RNAs, and small RNAs, such as 5S rRNA and tRNAs, respectively. The chain is Probable DNA-directed RNA polymerases I, II, and III subunit RPABC3 (rpb-8) from Caenorhabditis elegans.